Here is a 263-residue protein sequence, read N- to C-terminus: Hydroxyethylthiazole kinase (263 aa).

Substrate is bound at residue Met-41. 2 residues coordinate ATP: Lys-117 and Ser-163. Gly-190 is a binding site for substrate.

The protein belongs to the Thz kinase family. Mg(2+) serves as cofactor.

The enzyme catalyses 5-(2-hydroxyethyl)-4-methylthiazole + ATP = 4-methyl-5-(2-phosphooxyethyl)-thiazole + ADP + H(+). It functions in the pathway cofactor biosynthesis; thiamine diphosphate biosynthesis; 4-methyl-5-(2-phosphoethyl)-thiazole from 5-(2-hydroxyethyl)-4-methylthiazole: step 1/1. Its function is as follows. Catalyzes the phosphorylation of the hydroxyl group of 4-methyl-5-beta-hydroxyethylthiazole (THZ). This Thermoanaerobacter sp. (strain X514) protein is Hydroxyethylthiazole kinase.